The sequence spans 182 residues: UPF0301 protein NGK_1355 (182 aa).

The protein belongs to the UPF0301 (AlgH) family.

This chain is UPF0301 protein NGK_1355, found in Neisseria gonorrhoeae (strain NCCP11945).